Here is a 668-residue protein sequence, read N- to C-terminus: DNA ligase (668 aa).

NAD(+)-binding positions include 31-35 (DAEYD), 80-81 (SL), and Glu-112. Lys-114 functions as the N6-AMP-lysine intermediate in the catalytic mechanism. 4 residues coordinate NAD(+): Arg-135, Glu-172, Lys-289, and Lys-313. Zn(2+) contacts are provided by Cys-407, Cys-410, Cys-425, and Cys-431. The BRCT domain maps to 591–668 (SVPQPLAGKV…NEEQLIELLN (78 aa)).

It belongs to the NAD-dependent DNA ligase family. LigA subfamily. Mg(2+) serves as cofactor. Mn(2+) is required as a cofactor.

The catalysed reaction is NAD(+) + (deoxyribonucleotide)n-3'-hydroxyl + 5'-phospho-(deoxyribonucleotide)m = (deoxyribonucleotide)n+m + AMP + beta-nicotinamide D-nucleotide.. Its function is as follows. DNA ligase that catalyzes the formation of phosphodiester linkages between 5'-phosphoryl and 3'-hydroxyl groups in double-stranded DNA using NAD as a coenzyme and as the energy source for the reaction. It is essential for DNA replication and repair of damaged DNA. The polypeptide is DNA ligase (Aliivibrio fischeri (strain ATCC 700601 / ES114) (Vibrio fischeri)).